A 1605-amino-acid polypeptide reads, in one-letter code: Zinc finger protein jing homolog (1605 aa).

Polar residues predominate over residues 1-15; sequence MQHQSLSVRNSSGIS. 7 disordered regions span residues 1 to 28, 60 to 117, 359 to 388, 441 to 468, 856 to 877, 917 to 947, and 991 to 1213; these read MQHQ…VRSS, QWPW…QQSN, TRKV…TSDP, QQHQ…TQAQ, STTS…PPKL, TKAT…ASCT, and NDSG…TDFL. The span at 64–117 shows a compositional bias: low complexity; it reads NTSNNTNATNSNNVQSNNNSSTATSNSSTNSNNSPAVNTPTTQNQSQPTTQQSN. The segment covering 991 to 1000 has biased composition (polar residues); that stretch reads NDSGIVANSS. The span at 1021–1030 shows a compositional bias: basic and acidic residues; it reads PQKKDEESRQ. Pro residues predominate over residues 1035–1049; that stretch reads SPVPSPSPLSEPPVI. Composition is skewed to acidic residues over residues 1053–1090 and 1099–1110; these read SEPE…DEPH and SSEAVELPELED. Over residues 1112 to 1126 the composition is skewed to pro residues; that stretch reads QPSPPLPCELPPPPT. Positions 1135 to 1149 are enriched in low complexity; that stretch reads LSLPPSQKSPKSLLL. Residues 1165 to 1201 are compositionally biased toward polar residues; it reads QESMSSDQDYSNQSPLDESSPTGSAEPSESQRSTTPV. The C2H2-type 1 zinc finger occupies 1260–1285; sequence GVCYWSNCDAQFDTSSKLLDHLQIQH. The C2H2-type 2; degenerate zinc-finger motif lies at 1293 to 1320; that stretch reads FACLWDGCKVHNKESCSRRWLERHVLSH. Residues 1326–1350 form a C2H2-type 3 zinc finger; the sequence is HKCIVAGCGMRFGSQLALEKHVNHH. Disordered stretches follow at residues 1352-1371 and 1511-1605; these read NNTD…LPKV and CSRS…SSTS. 2 stretches are compositionally biased toward low complexity: residues 1511–1537 and 1556–1605; these read CSRS…SLIS and KQSY…SSTS.

Belongs to the AEBP2/jing C2H2-type zinc-finger family.

The protein resides in the nucleus. In terms of biological role, may functionally interact with Polycomb group (PcG) and trithorax group (trxG) proteins to repress transcription. The chain is Zinc finger protein jing homolog from Aedes aegypti (Yellowfever mosquito).